We begin with the raw amino-acid sequence, 354 residues long: NADH-quinone oxidoreductase subunit H (354 aa).

The next 8 membrane-spanning stretches (helical) occupy residues 25–45 (LVRI…LILW), 91–111 (WIYM…WAVI), 126–146 (LLYA…AGWA), 170–190 (MGFA…SGIV), 205–225 (FLSW…ISGI), 267–287 (IVIS…PFGF), 290–310 (FIPG…VFIW), and 330–350 (IFIP…MSPL).

Belongs to the complex I subunit 1 family. NDH-1 is composed of 14 different subunits. Subunits NuoA, H, J, K, L, M, N constitute the membrane sector of the complex.

The protein localises to the cell inner membrane. It carries out the reaction a quinone + NADH + 5 H(+)(in) = a quinol + NAD(+) + 4 H(+)(out). NDH-1 shuttles electrons from NADH, via FMN and iron-sulfur (Fe-S) centers, to quinones in the respiratory chain. The immediate electron acceptor for the enzyme in this species is believed to be ubiquinone. Couples the redox reaction to proton translocation (for every two electrons transferred, four hydrogen ions are translocated across the cytoplasmic membrane), and thus conserves the redox energy in a proton gradient. This subunit may bind ubiquinone. This is NADH-quinone oxidoreductase subunit H from Paraburkholderia xenovorans (strain LB400).